Here is a 190-residue protein sequence, read N- to C-terminus: LOB domain-containing protein 1 (190 aa).

The segment covering 1–11 has biased composition (polar residues); sequence MESKSDASVAT. Residues 1-27 are disordered; the sequence is MESKSDASVATTPIISSSSSPPPSLSP. Residues 32 to 133 form the LOB domain; it reads SPCAACKILR…AQLAKAQVEM (102 aa).

The protein belongs to the LOB domain-containing protein family. Expressed in young shoots, roots, stems, leaves and flowers.

In Arabidopsis thaliana (Mouse-ear cress), this protein is LOB domain-containing protein 1 (LBD1).